The sequence spans 258 residues: MLILISPAKTLDYQSPLVTTRYTRPELLDYSQQLIHEARKLSAPQIGKLMGISDKLADLNATRFHDWQPDFSPENARQAILAFKGDVYTGLQAETFSEADFDFAQQHLRMLSGLYGVLRPLDLMQPYRLEMGIRLENAKGKDLYQFWGDVITDKLNEALAAQGDKIVINLASDEYYKSVKPKQLNAEIIKPVFLDEKNGKFKVISFYAKKARGLMSRYIIENRLTKPEQLTAFNSEGYFYDEQASGKGELVFKRHEQN.

It belongs to the UPF0246 family.

In Citrobacter koseri (strain ATCC BAA-895 / CDC 4225-83 / SGSC4696), this protein is UPF0246 protein CKO_03380.